A 445-amino-acid polypeptide reads, in one-letter code: Methylphloroacetophenone oxidase (445 aa).

The chain crosses the membrane as a helical span at residues 25 to 45; it reads VLSIALIGVACAISIRSILYV. N-linked (GlcNAc...) asparagine glycosylation occurs at Asn51.

It belongs to the cytochrome P450 family.

It is found in the membrane. It participates in secondary metabolite biosynthesis. Its function is as follows. Methylphloroacetophenone oxidase; part of the gene cluster that mediates the biosynthesis of usnic acid, a dibenzofuran lichen product possessing a broad spectrum of biological activities. Two genes, mpas and mpao, comprise the usnic acid biosynthetic gene cluster with a single post-PKS enzyme, the methylphloracetophenone oxidase (mpao). The methylphloroacetophenone synthase (mpas) is a non-reducing polyketide synthase that produces methylphloracetophenone from acetate via a methylated tetraketide intermediate. The methylphloroacetophenone oxidase then carries out the oxidative dimerization of methylphloracetophenone to usnic acid. The chain is Methylphloroacetophenone oxidase from Cladonia uncialis (Cup lichen).